The sequence spans 251 residues: Malonyl-[acyl-carrier protein] O-methyltransferase (251 aa).

The protein belongs to the methyltransferase superfamily.

It carries out the reaction malonyl-[ACP] + S-adenosyl-L-methionine = malonyl-[ACP] methyl ester + S-adenosyl-L-homocysteine. It functions in the pathway cofactor biosynthesis; biotin biosynthesis. Its function is as follows. Converts the free carboxyl group of a malonyl-thioester to its methyl ester by transfer of a methyl group from S-adenosyl-L-methionine (SAM). It allows to synthesize pimeloyl-ACP via the fatty acid synthetic pathway. The chain is Malonyl-[acyl-carrier protein] O-methyltransferase from Pseudescherichia vulneris (Escherichia vulneris).